Reading from the N-terminus, the 397-residue chain is Putative protein FAM47D (397 aa).

It belongs to the FAM47 family.

This is Putative protein FAM47D (FAM47DP) from Homo sapiens (Human).